Consider the following 458-residue polypeptide: RuvB-like helicase 1 (458 aa).

Residue 71–78 (GGPGTGKT) participates in ATP binding.

The protein belongs to the RuvB family. In terms of assembly, may form heterododecamers with RVB2. Component of the SWR1 chromatin remodeling complex, the INO80 chromatin remodeling complex, and of the R2TP complex.

It is found in the nucleus. It catalyses the reaction ATP + H2O = ADP + phosphate + H(+). Its function is as follows. DNA helicase which participates in several chromatin remodeling complexes, including the SWR1 and the INO80 complexes. The SWR1 complex mediates the ATP-dependent exchange of histone H2A for the H2A variant HZT1 leading to transcriptional regulation of selected genes by chromatin remodeling. The INO80 complex remodels chromatin by shifting nucleosomes and is involved in DNA repair. Also involved in pre-rRNA processing. The polypeptide is RuvB-like helicase 1 (RVB1) (Gibberella zeae (strain ATCC MYA-4620 / CBS 123657 / FGSC 9075 / NRRL 31084 / PH-1) (Wheat head blight fungus)).